Reading from the N-terminus, the 245-residue chain is Neurovirulence factor ICP34.5 (245 aa).

Positions 1-15 (MARRRRRHRGPRRPR) are enriched in basic residues. Residues 1–17 (MARRRRRHRGPRRPRPP) are required for nucleolar localization. Disordered stretches follow at residues 1–122 (MARR…PFRL) and 143–172 (RRAG…PATP). The span at 25–36 (TAQSQVTSTPNS) shows a compositional bias: polar residues. Over residues 67–77 (ASDDDDDDDWP) the composition is skewed to acidic residues. 2 stretches are compositionally biased toward pro residues: residues 78-87 (DSPPPEPAPE) and 113-122 (SHPPSRPFRL). Residues 122 to 131 (LPPRLALRLR) carry the Nuclear export signal motif. A run of 6 repeats spans residues 155 to 157 (ATP), 158 to 160 (ATP), 161 to 163 (ATP), 164 to 166 (ATP), 167 to 169 (ATP), and 170 to 172 (ATP). A 6 X 3 AA tandem repeats of A-T-P region spans residues 155–172 (ATPATPATPATPATPATP). Over residues 158–172 (ATPATPATPATPATP) the composition is skewed to low complexity. Residues 172–185 (PARVRFSPHVRVRH) are binding to PP1CA. The segment at 172 to 185 (PARVRFSPHVRVRH) is interaction with host PPP1CA. Residues 187 to 245 (VVWASAARLARRGSWARERADRARFRRRVAEAEAVIGPCLGPEARARALARGAGPANSV) form an important for interferon resistance region. The short motif at 197 to 215 (RRGSWARERADRARFRRRV) is the Bipartite nuclear localization signal element. The interaction with host EIF2S1/EIF-2ALPHA stretch occupies residues 215 to 230 (VAEAEAVIGPCLGPEA).

It belongs to the PPP1R15 family. As to quaternary structure, interacts with host PPP1CA to form a high-molecular-weight complex that dephosphorylates EIF2S1/eIF-2alpha. Interacts with host EIF2S1/eIF-2alpha; this interaction is crucial for the specific dephosphorylation of EIF2S1/eIF-2alpha by PPP1CA. Binds to proliferating cell nuclear antigen (PCNA), which may release host cells from growth arrest and facilitate viral replication. Interacts (via N-terminus) with host C1QBP and PRKCA. Interacts with protein UL31. Interacts with host TBK1. Interacts with host STING/TMEM173; this interaction inhibits the intracellular DNA sensing pathway. Interacts with host BECN1; this interaction modulates host autophagy.

The protein localises to the host cytoplasm. Its subcellular location is the host nucleus. The protein resides in the host nucleolus. It is found in the virion. Functionally, inhibits the establishment of the immune response and of the integrated stress response (ISR) in the infected cell. Plays essential roles in viral nuclear egress to mediate capsid transit across the nuclear membrane. Facilitates nuclear egress cooperatively with host C1QBP and protein kinase C/PKC to induce lamin A/C phosphorylation and subsequent reorganization. In turn, lamina disassembles and nuclear egress occurs. Recruits the serine/threonine protein phosphatase PPP1CA/PP1-alpha to dephosphorylate the translation initiation factor EIF2S1/eIF-2alpha, thereby couteracting the host shutoff of protein synthesis involving double-stranded RNA-dependent protein kinase EIF2AK2/PKR. In turn, controls host IRF3 activation and subsequently inhibits host interferon response. Controls the DNA sensing pathway by interacting with and inhibiting host STING/TMEM173. Also down-modulates the host MHC class II proteins cell surface expression. Acts as a neurovirulence factor that has a profound effect on the growth of the virus in central nervous system tissue, by interacting with host BECN1 and thereby antagonizing the host autophagy response. The sequence is that of Neurovirulence factor ICP34.5 (RL1) from Homo sapiens (Human).